The following is a 547-amino-acid chain: Chaperonin GroEL (547 aa).

ATP is bound by residues 30-33 (TLGP), Lys51, 87-91 (DGTTT), Gly415, and Asp495. Positions 526–547 (KKESAGGGGMPGGMGGMGGMDF) are disordered. Positions 530 to 547 (AGGGGMPGGMGGMGGMDF) are enriched in gly residues.

This sequence belongs to the chaperonin (HSP60) family. As to quaternary structure, forms a cylinder of 14 subunits composed of two heptameric rings stacked back-to-back. Interacts with the co-chaperonin GroES.

Its subcellular location is the cytoplasm. The enzyme catalyses ATP + H2O + a folded polypeptide = ADP + phosphate + an unfolded polypeptide.. In terms of biological role, together with its co-chaperonin GroES, plays an essential role in assisting protein folding. The GroEL-GroES system forms a nano-cage that allows encapsulation of the non-native substrate proteins and provides a physical environment optimized to promote and accelerate protein folding. The polypeptide is Chaperonin GroEL (Hyphomonas neptunium (strain ATCC 15444)).